The chain runs to 484 residues: Probable autolysin PH (484 aa).

Residues 5–148 form the Peptidase C51 domain; the sequence is KNQAEKWFDN…YYDDPMYFIR (144 aa). The 183-residue stretch at 181–363 folds into the MurNAc-LAA domain; sequence IMLVAGHGYN…YSKLIAGAIH (183 aa). Positions 402–472 constitute an SH3b domain; the sequence is KETGYYTVAN…IATGEVDKAG (71 aa).

The catalysed reaction is Hydrolyzes the link between N-acetylmuramoyl residues and L-amino acid residues in certain cell-wall glycopeptides.. Has weak lytic activity toward S.aureus cells. Full-length protein has no activity, but fusion of the Peptidase C51 domain to the lysostaphin SH3 cell wall binding domain yields an active chimeric enzyme, suggesting that PH may be functional. In Staphylococcus aureus (strain NCTC 8325 / PS 47), this protein is Probable autolysin PH.